The chain runs to 65 residues: DNA-directed RNA polymerase subunit Rpo10 (65 aa).

Positions 7, 10, 44, and 45 each coordinate Zn(2+).

It belongs to the archaeal Rpo10/eukaryotic RPB10 RNA polymerase subunit family. As to quaternary structure, part of the RNA polymerase complex. Zn(2+) serves as cofactor.

The protein localises to the cytoplasm. The enzyme catalyses RNA(n) + a ribonucleoside 5'-triphosphate = RNA(n+1) + diphosphate. Functionally, DNA-dependent RNA polymerase (RNAP) catalyzes the transcription of DNA into RNA using the four ribonucleoside triphosphates as substrates. This chain is DNA-directed RNA polymerase subunit Rpo10, found in Nanoarchaeum equitans (strain Kin4-M).